Consider the following 178-residue polypeptide: Transcription factor E (178 aa).

The HTH TFE/IIEalpha-type domain maps to 5-89; sequence AEELILSLAK…YWKVNIDQIN (85 aa).

Belongs to the TFE family. In terms of assembly, monomer. Interaction with RNA polymerase subunits RpoF and RpoE is necessary for Tfe stimulatory transcription activity. Able to interact with Tbp and RNA polymerase in the absence of DNA promoter. Interacts both with the preinitiation and elongation complexes.

Its function is as follows. Transcription factor that plays a role in the activation of archaeal genes transcribed by RNA polymerase. Facilitates transcription initiation by enhancing TATA-box recognition by TATA-box-binding protein (Tbp), and transcription factor B (Tfb) and RNA polymerase recruitment. Not absolutely required for transcription in vitro, but particularly important in cases where Tbp or Tfb function is not optimal. It dynamically alters the nucleic acid-binding properties of RNA polymerases by stabilizing the initiation complex and destabilizing elongation complexes. Seems to translocate with the RNA polymerase following initiation and acts by binding to the non template strand of the transcription bubble in elongation complexes. In Sulfurisphaera tokodaii (strain DSM 16993 / JCM 10545 / NBRC 100140 / 7) (Sulfolobus tokodaii), this protein is Transcription factor E.